The sequence spans 533 residues: Beta-glucosidase 24 (533 aa).

The signal sequence occupies residues 1–26 (MVLQKLPLMSIGLLWLLIIVGPLVNA). An a beta-D-glucoside-binding site is contributed by Gln58. Asn64 and Asn88 each carry an N-linked (GlcNAc...) asparagine glycan. Residues His161 and 206–207 (NE) contribute to the a beta-D-glucoside site. Residue Glu207 is the Proton donor of the active site. Cys226 and Cys239 are joined by a disulfide. Residue Tyr355 participates in a beta-D-glucoside binding. Asn388 carries N-linked (GlcNAc...) asparagine glycosylation. Glu427 contributes to the a beta-D-glucoside binding site. Glu427 functions as the Nucleophile in the catalytic mechanism. N-linked (GlcNAc...) asparagine glycans are attached at residues Asn437, Asn442, and Asn470. Residues Trp477, 484-485 (EW), and Phe493 each bind a beta-D-glucoside. An N-linked (GlcNAc...) asparagine glycan is attached at Asn503. The Prevents secretion from ER signature appears at 530–533 (KDEL).

It belongs to the glycosyl hydrolase 1 family.

The protein resides in the endoplasmic reticulum lumen. The catalysed reaction is Hydrolysis of terminal, non-reducing beta-D-glucosyl residues with release of beta-D-glucose.. The protein is Beta-glucosidase 24 of Arabidopsis thaliana (Mouse-ear cress).